Reading from the N-terminus, the 327-residue chain is Methionyl-tRNA formyltransferase (327 aa).

S121–P124 is a (6S)-5,6,7,8-tetrahydrofolate binding site.

Belongs to the Fmt family.

It catalyses the reaction L-methionyl-tRNA(fMet) + (6R)-10-formyltetrahydrofolate = N-formyl-L-methionyl-tRNA(fMet) + (6S)-5,6,7,8-tetrahydrofolate + H(+). Functionally, attaches a formyl group to the free amino group of methionyl-tRNA(fMet). The formyl group appears to play a dual role in the initiator identity of N-formylmethionyl-tRNA by promoting its recognition by IF2 and preventing the misappropriation of this tRNA by the elongation apparatus. The chain is Methionyl-tRNA formyltransferase from Burkholderia multivorans (strain ATCC 17616 / 249).